The chain runs to 388 residues: Formate-dependent phosphoribosylglycinamide formyltransferase (388 aa).

N(1)-(5-phospho-beta-D-ribosyl)glycinamide contacts are provided by residues 11–12 and E71; that span reads EL. ATP-binding positions include R103, K144, 149–154, 184–187, and E192; these read SSGKGQ and EEFI. Residues 108–300 enclose the ATP-grasp domain; it reads DLAAKELGLK…EFELHLRAVL (193 aa). Mg(2+)-binding residues include E257 and E270. Residues D277, K349, and 356–357 each bind N(1)-(5-phospho-beta-D-ribosyl)glycinamide; that span reads RR.

This sequence belongs to the PurK/PurT family. In terms of assembly, homodimer.

It catalyses the reaction N(1)-(5-phospho-beta-D-ribosyl)glycinamide + formate + ATP = N(2)-formyl-N(1)-(5-phospho-beta-D-ribosyl)glycinamide + ADP + phosphate + H(+). It functions in the pathway purine metabolism; IMP biosynthesis via de novo pathway; N(2)-formyl-N(1)-(5-phospho-D-ribosyl)glycinamide from N(1)-(5-phospho-D-ribosyl)glycinamide (formate route): step 1/1. Involved in the de novo purine biosynthesis. Catalyzes the transfer of formate to 5-phospho-ribosyl-glycinamide (GAR), producing 5-phospho-ribosyl-N-formylglycinamide (FGAR). Formate is provided by PurU via hydrolysis of 10-formyl-tetrahydrofolate. The polypeptide is Formate-dependent phosphoribosylglycinamide formyltransferase (Bacteroides thetaiotaomicron (strain ATCC 29148 / DSM 2079 / JCM 5827 / CCUG 10774 / NCTC 10582 / VPI-5482 / E50)).